The primary structure comprises 1641 residues: Ophiophagus venom factor (1641 aa).

An N-terminal signal peptide occupies residues 1–22 (MEGMALYLVAALLIGFPGSSHG). Residues N181 and N209 are each glycosylated (N-linked (GlcNAc...) asparagine). Mg(2+) contacts are provided by P507, D530, V531, and D533. Intrachain disulfides connect C535/C796, C604/C639, C672/C699, C673/C706, C686/C707, C852/C1491, C1336/C1467, C1367/C1436, C1484/C1489, C1496/C1568, C1515/C1639, and C1615/C1624. A propeptide spanning residues 645 to 728 (RRRRSSVLLL…WESGLFLPRN (84 aa)) is cleaved from the precursor. A C3a-like domain region spans residues 649-727 (SSVLLLDSKA…QWESGLFLPR (79 aa)). One can recognise an Anaphylatoxin-like domain in the interval 672–707 (CCEDSMHENPMGYTCEKRAKYIQEGDACKAAFLECC). Residues 731-742 (EDGFIQDSDIIP) are factor B binding site. The propeptide occupies 981-1259 (HLIITPSGCG…VMLFQALAEY (279 aa)). The tract at residues 981-1259 (HLIITPSGCG…VMLFQALAEY (279 aa)) is C3d-like domain. A cross-link (isoglutamyl cysteine thioester (Cys-Gln)) is located at residues 989 to 992 (CGEQ). Residues 1186–1249 (VLMAASTGKN…GGTYGQTQAT (64 aa)) are factor H binding site. Residues 1496–1639 (CSLLSQQEKI…LSNILTIFGC (144 aa)) form the NTR domain.

It belongs to the venom complement C3 homolog family. As to quaternary structure, heterotrimer of alpha, beta and gamma chains; disulfide-linked. May be active with factor B in the presence of factor D. Post-translationally, first processed by the removal of 4 Arg residues by furin-type protease, forming two chains, alpha and gamma/beta precursor, linked by a disulfide bond. Probably, a cobrin-like protease cleaves the C3a-like domain and then the C3d-like domain, generating the mature venom factor (OVF). The beta chain is not glycosylated. Expressed by the venom gland.

Its subcellular location is the secreted. Functionally, complement-activating protein in cobra venom. It is a structural and functional analog of complement component C3b, the activated form of C3. It binds factor B (CFB), which is subsequently cleaved by factor D (CFD) to form the bimolecular complex OVF/Bb. OVF/Bb is a C3/C5 convertase that cleaves both complement components C3 and C5. Structurally, it resembles the C3b degradation product C3c, which is not able to form a C3/C5 convertase. Unlike C3b/Bb, OVF/Bb is a stable complex and completely resistant to the actions of complement regulatory factors H (CFH) and I (CFI). Therefore, OVF continuously activates complement. As a result, OVF exhibits complement-depleting activity. The protein is Ophiophagus venom factor of Ophiophagus hannah (King cobra).